Consider the following 509-residue polypeptide: SH2 domain-containing adapter protein B (509 aa).

Disordered stretches follow at residues 1 to 103 (MAKW…GSSL) and 144 to 178 (SGAGAAASSSSSSGSPHLYRSSSERRPATPAEVRY). The tract at residues 1–410 (MAKWLNKYFS…PAVPLEKQIW (410 aa)) is mediates interaction with LAT, PTK2/FAK1, JAK1 and JAK3. Positions 44 to 61 (VPQASSAASASCGPATAS) are enriched in low complexity. Polar residues predominate over residues 62–79 (CFSASSGSLPDDSGSTSD). At S102 the chain carries Phosphoserine. Residues 144–158 (SGAGAAASSSSSSGS) are compositionally biased toward low complexity. K187 is covalently cross-linked (Glycyl lysine isopeptide (Lys-Gly) (interchain with G-Cter in SUMO2)). The disordered stretch occupies residues 229–385 (AEESGAGKKD…APGGGFKPIK (157 aa)). Composition is skewed to basic and acidic residues over residues 233–242 (GAGKKDKVTI) and 250–262 (FDAKNDLKSKAGK). Phosphoserine is present on residues S307 and S317. Over residues 307–317 (SVDSDSESTVS) the composition is skewed to polar residues. Over residues 319-334 (RLRESKLPQDDDRPAD) the composition is skewed to basic and acidic residues. Phosphoserine is present on S388. The region spanning 410–504 (WYHGAISRGD…AEHLSLLYPV (95 aa)) is the SH2 domain.

Interacts with PTPN11. Interacts with phosphorylated 'Tyr-720' of the ligand-activated receptor PDGFRA via its SH2 domain. Interacts with the ligand-activated receptors PDGFRB, FGFR1, KDR/VEGFR2, IL2RB and IL2RG. Interacts with EPS8 and V-SRC. Interacts with GRB2 and GRAP. Interacts with CD3Z. Interacts with tyrosine-phosphorylated LAT upon T-cell antigen receptor activation. Interacts with PLCG1. Interacts with ZAP70, LCP2/SLP-76, VAV1 and GRAP2. Interacts with JAK1 and JAK3. Interacts with PTK2/FAK1. Interacts with CRK/CrKII. Interacts with IRS2. Post-translationally, phosphorylated upon PDGFRA, PDGFRB, TCR, IL2 receptor, FGFR1 or VEGFR2 activation. In terms of tissue distribution, widely expressed.

The protein resides in the cytoplasm. It is found in the cell membrane. Functionally, adapter protein which regulates several signal transduction cascades by linking activated receptors to downstream signaling components. May play a role in angiogenesis by regulating FGFR1, VEGFR2 and PDGFR signaling. May also play a role in T-cell antigen receptor/TCR signaling, interleukin-2 signaling, apoptosis and neuronal cells differentiation by mediating basic-FGF and NGF-induced signaling cascades. May also regulate IRS1 and IRS2 signaling in insulin-producing cells. The polypeptide is SH2 domain-containing adapter protein B (SHB) (Homo sapiens (Human)).